The following is a 211-amino-acid chain: Protoglabretal synthase MOI1 (211 aa).

The next 5 helical transmembrane spans lie at 16–36, 50–70, 104–124, 135–155, and 179–199; these read ASLH…TWII, LICW…YYVF, VLGI…LAAY, IFQF…FLTA, and IWVI…HAIC. Residues 46–188 form the EXPERA domain; it reads IERLLICWWA…IWVIVPMLIA (143 aa).

Belongs to the EBP family. As to expression, expressed in maturing fruits and in juice vesicles.

It localises to the membrane. It carries out the reaction 7,8-epoxymelianol = protoglabretal. It functions in the pathway secondary metabolite biosynthesis; terpenoid biosynthesis. Isomerase involved in the biosynthesis of glabretanes triterpene natural products such as glabretal, a component with in vitro antiproliferative properties on lymphocytes. Catalyzes the conversion of 7,8-epoxymelianol to protoglabretal via skeletal rearrangements. The chain is Protoglabretal synthase MOI1 from Citrus sinensis (Sweet orange).